Consider the following 92-residue polypeptide: UPF0223 protein SMU_1141c (92 aa).

This sequence belongs to the UPF0223 family.

The protein is UPF0223 protein SMU_1141c of Streptococcus mutans serotype c (strain ATCC 700610 / UA159).